A 298-amino-acid chain; its full sequence is Dioxygenase aneA (298 aa).

Residues H134, D136, and H213 each contribute to the Fe cation site.

The protein belongs to the PhyH family. As to quaternary structure, homodimer. It depends on Fe cation as a cofactor.

The enzyme catalyses aculene D + 2-oxoglutarate + O2 = aculene C + succinate + CO2 + H2O. It catalyses the reaction aculene B + 2-oxoglutarate + O2 = aculene A + succinate + CO2 + H2O. It functions in the pathway secondary metabolite biosynthesis. Dioxygenase; part of the gene cluster that mediates the biosynthesis of aculenes, a unique type of norsesquiterpenes that contain a nordaucane skeleton linked to an L-proline moiety and are of mixed biosynthetic origin. The pathway begins with the synthesis of dauca-4,7-diene by the terpene cyclase aneC using farnesyl pyrophosphate (FPP) as substrate. The cytochrome P450 monooxygenase aneF then performs the initial oxidation at C-12 of dauca-4,7-diene to yield asperaculane D. Asperaculane D is substrate of the cytochrome P450 monooxygenase aneD for C-10 hydroxylation to yield asperaculane E. The cytochrome P450 monooxygenase aneG then converts asperaculane E into aculene D via C-2 oxidation. The monomodular nonribosomal peptide synthase aneB adenylates L-proline and the thiohydrolase aneE transfers this activated L-proline derivative to aculenes D and C to produce respectively aculenes B and A. The dioxygenase aneA converts aculene D into aculene C, and aculene B into aculene A by introducing the 5,6-alkene moiety. Asperculanes A, B, C and F, as well as 14-prolyl asperculane C, might be shunt products of the pathway. This is Dioxygenase aneA from Aspergillus aculeatus (strain ATCC 16872 / CBS 172.66 / WB 5094).